A 213-amino-acid polypeptide reads, in one-letter code: CDP-diacylglycerol--inositol 3-phosphatidyltransferase (213 aa).

Over 1 to 5 the chain is Cytoplasmic; sequence MPEEN. The chain crosses the membrane as a helical span at residues 6-26; that stretch reads IFLFVPNLIGYARIVFAIISF. A topological domain (lumenal) is located at residue Tyr27. A helical transmembrane segment spans residues 28–48; the sequence is FMPCCPFTASSFYLLSGLLDA. The Mg(2+) site is built by Asp47 and Asp50. At 49-73 the chain is on the cytoplasmic side; sequence FDGHAARALNQGTRFGAMLDMLTDR. A CDP-1,2-diacyl-sn-glycerol-binding residues include Gly51, Arg55, and Thr61. Mg(2+)-binding residues include Asp68 and Asp72. Asp72 (proton acceptor) is an active-site residue. The helical transmembrane segment at 74–94 threads the bilayer; the sequence is CATMCLLVNLALLYPRATLLF. Gln95 is a topological domain (lumenal). A helical transmembrane segment spans residues 96 to 116; sequence LSMSLDVASHWLHLHSSVVRG. The Cytoplasmic portion of the chain corresponds to 117–139; the sequence is SESHKMIDLSGNPVLRIYYTSRP. Residues 140–160 traverse the membrane as a helical segment; the sequence is ALFTLCAGNELFYCLLYLFNF. The Lumenal portion of the chain corresponds to 161–174; sequence SEGPLVGSVGLFRM. The helical transmembrane segment at 175–195 threads the bilayer; the sequence is GLWITAPIALLKSIISVIHLV. At 196–213 the chain is on the cytoplasmic side; the sequence is TAARNMAALDAADRAKKK.

The protein belongs to the CDP-alcohol phosphatidyltransferase class-I family. It depends on Mn(2+) as a cofactor. Requires Mg(2+) as cofactor. As to expression, detected in liver (at protein level). Widely expressed. Highly expressed in the brain and kidney; lower levels in heart, spleen, lung, liver, skeletal muscle and testis.

The protein localises to the endoplasmic reticulum membrane. Its subcellular location is the cell membrane. The catalysed reaction is a CDP-1,2-diacyl-sn-glycerol + myo-inositol = a 1,2-diacyl-sn-glycero-3-phospho-(1D-myo-inositol) + CMP + H(+). Its function is as follows. Catalyzes the biosynthesis of phosphatidylinositol (PtdIns) as well as PtdIns:inositol exchange reaction. May thus act to reduce an excessive cellular PtdIns content. The exchange activity is due to the reverse reaction of PtdIns synthase and is dependent on CMP, which is tightly bound to the enzyme. The chain is CDP-diacylglycerol--inositol 3-phosphatidyltransferase from Rattus norvegicus (Rat).